The primary structure comprises 288 residues: Phosphatidylserine decarboxylase proenzyme (288 aa).

Catalysis depends on charge relay system; for autoendoproteolytic cleavage activity residues Asp-90, His-147, and Ser-252. The active-site Schiff-base intermediate with substrate; via pyruvic acid; for decarboxylase activity is Ser-252. At Ser-252 the chain carries Pyruvic acid (Ser); by autocatalysis.

The protein belongs to the phosphatidylserine decarboxylase family. PSD-B subfamily. Prokaryotic type I sub-subfamily. In terms of assembly, heterodimer of a large membrane-associated beta subunit and a small pyruvoyl-containing alpha subunit. Pyruvate serves as cofactor. Post-translationally, is synthesized initially as an inactive proenzyme. Formation of the active enzyme involves a self-maturation process in which the active site pyruvoyl group is generated from an internal serine residue via an autocatalytic post-translational modification. Two non-identical subunits are generated from the proenzyme in this reaction, and the pyruvate is formed at the N-terminus of the alpha chain, which is derived from the carboxyl end of the proenzyme. The autoendoproteolytic cleavage occurs by a canonical serine protease mechanism, in which the side chain hydroxyl group of the serine supplies its oxygen atom to form the C-terminus of the beta chain, while the remainder of the serine residue undergoes an oxidative deamination to produce ammonia and the pyruvoyl prosthetic group on the alpha chain. During this reaction, the Ser that is part of the protease active site of the proenzyme becomes the pyruvoyl prosthetic group, which constitutes an essential element of the active site of the mature decarboxylase.

The protein resides in the cell membrane. It carries out the reaction a 1,2-diacyl-sn-glycero-3-phospho-L-serine + H(+) = a 1,2-diacyl-sn-glycero-3-phosphoethanolamine + CO2. It participates in phospholipid metabolism; phosphatidylethanolamine biosynthesis; phosphatidylethanolamine from CDP-diacylglycerol: step 2/2. In terms of biological role, catalyzes the formation of phosphatidylethanolamine (PtdEtn) from phosphatidylserine (PtdSer). The chain is Phosphatidylserine decarboxylase proenzyme from Pseudomonas fluorescens (strain ATCC BAA-477 / NRRL B-23932 / Pf-5).